Consider the following 328-residue polypeptide: Probable fused nickel transport protein LarMN (328 aa).

8 consecutive transmembrane segments (helical) span residues 8–28, 42–62, 75–95, 103–123, 138–158, 187–207, 229–249, and 296–316; these read LSPA…TVAV, LPML…NLPI, LLAV…TLLL, GGIL…PFVG, LGLA…AGIE, MLTA…LLVF, PWIA…LASN, and PVSV…LLLI.

It belongs to the CbiM family. NikM subfamily. May form an energy-coupling factor (ECF) transporter complex composed of an ATP-binding protein (A component, LarO), a transmembrane protein (T component, LarQ) and a fused possible substrate-capture protein (S component, LarMN) of unknown stoichiometry.

Its subcellular location is the cell membrane. Probably part of the energy-coupling factor (ECF) transporter complex LarMNQO involved in nickel import. This chain is Probable fused nickel transport protein LarMN, found in Lactiplantibacillus plantarum (strain ATCC BAA-793 / NCIMB 8826 / WCFS1) (Lactobacillus plantarum).